Consider the following 358-residue polypeptide: tRNA N6-adenosine threonylcarbamoyltransferase (358 aa).

Fe cation contacts are provided by histidine 111 and histidine 115. Residues 146-150, aspartate 179, glycine 192, and asparagine 294 each bind substrate; that span reads LVSGG. Aspartate 322 lines the Fe cation pocket.

It belongs to the KAE1 / TsaD family. It depends on Fe(2+) as a cofactor.

The protein resides in the cytoplasm. The enzyme catalyses L-threonylcarbamoyladenylate + adenosine(37) in tRNA = N(6)-L-threonylcarbamoyladenosine(37) in tRNA + AMP + H(+). Functionally, required for the formation of a threonylcarbamoyl group on adenosine at position 37 (t(6)A37) in tRNAs that read codons beginning with adenine. Is involved in the transfer of the threonylcarbamoyl moiety of threonylcarbamoyl-AMP (TC-AMP) to the N6 group of A37, together with TsaE and TsaB. TsaD likely plays a direct catalytic role in this reaction. This is tRNA N6-adenosine threonylcarbamoyltransferase from Helicobacter hepaticus (strain ATCC 51449 / 3B1).